A 166-amino-acid polypeptide reads, in one-letter code: MLPAYLPNPAAALFGGGTPIDGGRRWSDGRRLLGDGKTWRGLVLGILSGVLLGLIQVSVQDACVFVWLPRHTVLSVLLLAVGALAGDMVKSFVKRRIGKERGAAWPLADQYDLVAGSLLLLLIGDYGFAAVNLTIPVIFWILVLTPLLHRAVNLIGYAIGVKDVPW.

4 helical membrane passes run 42-62 (LVLG…VQDA), 73-93 (VLSV…KSFV), 103-123 (AAWP…LLLI), and 128-148 (FAAV…TPLL).

Belongs to the CDP-archaeol synthase family. Mg(2+) serves as cofactor.

The protein localises to the cell membrane. It carries out the reaction 2,3-bis-O-(geranylgeranyl)-sn-glycerol 1-phosphate + CTP + H(+) = CDP-2,3-bis-O-(geranylgeranyl)-sn-glycerol + diphosphate. The protein operates within membrane lipid metabolism; glycerophospholipid metabolism. Functionally, catalyzes the formation of CDP-2,3-bis-(O-geranylgeranyl)-sn-glycerol (CDP-archaeol) from 2,3-bis-(O-geranylgeranyl)-sn-glycerol 1-phosphate (DGGGP) and CTP. This reaction is the third ether-bond-formation step in the biosynthesis of archaeal membrane lipids. The chain is CDP-archaeol synthase from Methanosphaerula palustris (strain ATCC BAA-1556 / DSM 19958 / E1-9c).